We begin with the raw amino-acid sequence, 417 residues long: Mast cell carboxypeptidase A (417 aa).

A signal peptide spans 1-15 (MRFFLLMAVIYTTLA). Positions 16–109 (IAPVHFDREK…IEKQFDVKDE (94 aa)) are cleaved as a propeptide — activation peptide. The Peptidase M14 domain maps to 118–412 (KYNDWDKIVS…LSVKFIAKYI (295 aa)). 2 disulfide bridges follow: C173–C186 and C245–C268. H176 and E179 together coordinate Zn(2+). H304 is a Zn(2+) binding site. The active-site Proton donor/acceptor is the E378.

This sequence belongs to the peptidase M14 family. Requires Zn(2+) as cofactor.

It localises to the cytoplasmic vesicle. The protein resides in the secretory vesicle. It catalyses the reaction Release of a C-terminal amino acid, but little or no action with -Asp, -Glu, -Arg, -Lys or -Pro.. The protein is Mast cell carboxypeptidase A (Cpa3) of Mus musculus (Mouse).